Consider the following 124-residue polypeptide: Small ribosomal subunit protein uS12 (124 aa).

Residue Asp-90 is modified to 3-methylthioaspartic acid.

Belongs to the universal ribosomal protein uS12 family. Part of the 30S ribosomal subunit. Contacts proteins S8 and S17. May interact with IF1 in the 30S initiation complex.

In terms of biological role, with S4 and S5 plays an important role in translational accuracy. Interacts with and stabilizes bases of the 16S rRNA that are involved in tRNA selection in the A site and with the mRNA backbone. Located at the interface of the 30S and 50S subunits, it traverses the body of the 30S subunit contacting proteins on the other side and probably holding the rRNA structure together. The combined cluster of proteins S8, S12 and S17 appears to hold together the shoulder and platform of the 30S subunit. This Wolbachia pipientis wMel protein is Small ribosomal subunit protein uS12.